Here is a 375-residue protein sequence, read N- to C-terminus: MKLSDFDFNVPNALIAQYPSSERDNSDLLIAGTKHIKTKFYNIIDYLKEGDLLVFNNSKVIKAKLHLGKNITINLNKKLSDNCWGAFAKPARKLNIGDEFYFDTHKIIITEKLAMGEIKVKFILNNISMIKFLDKYGEMPLPFYIKRTSSVCCSNMALFCDHDNTLKITSISHNSNTVNFRSTDSMIDSTNDNDRYQTIYSQIEGSVAAPTAGLHFTKDILDKLKTKGINTAFVTLHVGAGTFLPVKTENIHKHKMHTEYCSITAETAEIINKTKQKGRDIIAVGTTTLRTLESSCNNGIVKAGNFETDIFITPGFNFQIVDMLLTNFHFPKSTLFILICAFAGFKEMHALYKYAIKEKMRFFSYGDATLLYRKV.

Belongs to the QueA family. As to quaternary structure, monomer.

The protein localises to the cytoplasm. It carries out the reaction 7-aminomethyl-7-carbaguanosine(34) in tRNA + S-adenosyl-L-methionine = epoxyqueuosine(34) in tRNA + adenine + L-methionine + 2 H(+). It functions in the pathway tRNA modification; tRNA-queuosine biosynthesis. In terms of biological role, transfers and isomerizes the ribose moiety from AdoMet to the 7-aminomethyl group of 7-deazaguanine (preQ1-tRNA) to give epoxyqueuosine (oQ-tRNA). This is S-adenosylmethionine:tRNA ribosyltransferase-isomerase from Rickettsia typhi (strain ATCC VR-144 / Wilmington).